An 89-amino-acid chain; its full sequence is Small ribosomal subunit protein uS15 (89 aa).

Belongs to the universal ribosomal protein uS15 family. As to quaternary structure, part of the 30S ribosomal subunit. Forms a bridge to the 50S subunit in the 70S ribosome, contacting the 23S rRNA.

Its function is as follows. One of the primary rRNA binding proteins, it binds directly to 16S rRNA where it helps nucleate assembly of the platform of the 30S subunit by binding and bridging several RNA helices of the 16S rRNA. In terms of biological role, forms an intersubunit bridge (bridge B4) with the 23S rRNA of the 50S subunit in the ribosome. The sequence is that of Small ribosomal subunit protein uS15 from Gluconobacter oxydans (strain 621H) (Gluconobacter suboxydans).